Here is a 277-residue protein sequence, read N- to C-terminus: Large ribosomal subunit protein uL2 (277 aa).

Disordered stretches follow at residues 35 to 57 (RPLH…QGGG) and 222 to 277 (GVAM…NRRR). Basic residues-rich tracts occupy residues 37–57 (LHSK…QGGG) and 268–277 (VRRRKQNRRR).

Belongs to the universal ribosomal protein uL2 family. Part of the 50S ribosomal subunit. Forms a bridge to the 30S subunit in the 70S ribosome.

One of the primary rRNA binding proteins. Required for association of the 30S and 50S subunits to form the 70S ribosome, for tRNA binding and peptide bond formation. It has been suggested to have peptidyltransferase activity; this is somewhat controversial. Makes several contacts with the 16S rRNA in the 70S ribosome. In Frankia casuarinae (strain DSM 45818 / CECT 9043 / HFP020203 / CcI3), this protein is Large ribosomal subunit protein uL2.